Reading from the N-terminus, the 273-residue chain is Dermonecrotic toxin LsaSicTox-alphaIB1aii (273 aa).

His-5 is an active-site residue. Mg(2+) contacts are provided by Glu-25 and Asp-27. Catalysis depends on His-41, which acts as the Nucleophile. Cystine bridges form between Cys-45-Cys-51 and Cys-47-Cys-190. Asp-85 contributes to the Mg(2+) binding site.

Belongs to the arthropod phospholipase D family. Class II subfamily. The cofactor is Mg(2+). Expressed by the venom gland.

The protein localises to the secreted. It carries out the reaction an N-(acyl)-sphingosylphosphocholine = an N-(acyl)-sphingosyl-1,3-cyclic phosphate + choline. It catalyses the reaction an N-(acyl)-sphingosylphosphoethanolamine = an N-(acyl)-sphingosyl-1,3-cyclic phosphate + ethanolamine. The enzyme catalyses a 1-acyl-sn-glycero-3-phosphocholine = a 1-acyl-sn-glycero-2,3-cyclic phosphate + choline. The catalysed reaction is a 1-acyl-sn-glycero-3-phosphoethanolamine = a 1-acyl-sn-glycero-2,3-cyclic phosphate + ethanolamine. In terms of biological role, dermonecrotic toxins cleave the phosphodiester linkage between the phosphate and headgroup of certain phospholipids (sphingolipid and lysolipid substrates), forming an alcohol (often choline) and a cyclic phosphate. This toxin acts on sphingomyelin (SM). It may also act on ceramide phosphoethanolamine (CPE), lysophosphatidylcholine (LPC) and lysophosphatidylethanolamine (LPE), but not on lysophosphatidylserine (LPS), and lysophosphatidylglycerol (LPG). It acts by transphosphatidylation, releasing exclusively cyclic phosphate products as second products. Induces dermonecrosis, hemolysis, increased vascular permeability, edema, inflammatory response, and platelet aggregation. The sequence is that of Dermonecrotic toxin LsaSicTox-alphaIB1aii from Loxosceles sabina (Tucson recluse spider).